A 271-amino-acid polypeptide reads, in one-letter code: RELT-like protein 1 (271 aa).

The signal sequence occupies residues 1–23 (MAPRALPGSAVLAAAVFVGGAVS). At 24 to 57 (SPLVAPDNGSSRTLHSRTETTPSPSNDTGNGHPE) the chain is on the extracellular side. The interval 28–53 (APDNGSSRTLHSRTETTPSPSNDTGN) is disordered. N-linked (GlcNAc...) asparagine glycosylation is found at Asn-31 and Asn-49. Residues 31–52 (NGSSRTLHSRTETTPSPSNDTG) are compositionally biased toward polar residues. The helical transmembrane segment at 58-78 (YIAYALVPVFFIMGLFGVLIC) threads the bilayer. The Cytoplasmic portion of the chain corresponds to 79–271 (HLLKKKGYRC…PVKRERSGTE (193 aa)). Positions 89–113 (TTEAEQDIEEEKVEKIELNDSVNEN) form a coiled coil. Residues Ser-109 and Ser-114 each carry the phosphoserine modification. Disordered stretches follow at residues 145 to 173 (DPES…TPGK) and 233 to 271 (VEHK…SGTE). Over residues 155-165 (PGSPPVSPGPL) the composition is skewed to pro residues. The segment covering 233-244 (VEHKSNQKERRS) has biased composition (basic and acidic residues). Phosphoserine is present on residues Ser-244 and Ser-247.

The protein belongs to the RELT family. Interacts with RELT, RELL2 and OXSR1. Interacts with PLSCR1. Post-translationally, phosphorylated in vitro by OXSR1. In terms of tissue distribution, widely expressed. Expressed at highest levels in the placenta, skeletal muscle, spleen and testis.

It is found in the cell membrane. In terms of biological role, induces activation of MAPK14/p38 cascade, when overexpressed. Induces apoptosis, when overexpressed. The polypeptide is RELT-like protein 1 (RELL1) (Homo sapiens (Human)).